A 94-amino-acid polypeptide reads, in one-letter code: Putative pterin-4-alpha-carbinolamine dehydratase (94 aa).

The protein belongs to the pterin-4-alpha-carbinolamine dehydratase family.

The catalysed reaction is (4aS,6R)-4a-hydroxy-L-erythro-5,6,7,8-tetrahydrobiopterin = (6R)-L-erythro-6,7-dihydrobiopterin + H2O. In Mycobacterium sp. (strain JLS), this protein is Putative pterin-4-alpha-carbinolamine dehydratase.